Reading from the N-terminus, the 327-residue chain is MKEIELNSDSLEIYEKSASEKLNKKDLVDLWNLDLKNLLDISYSLKKLFNKEKIDLCSIMNAKSGVCSENCIFCSQSKHNSSKIDTYELKSKEEILKNAKSVEKYSNRFSIVVSGKSVTDLEFENIIESIEEIQNKTKLKVCVSLGLLNKDKLKALKEKNVRIHNNLETSENYFKNICTSHDYIDKIKVILEAKKMGLEMCSGGIFGMGESVADRVDLLLDLKKLDVDSVALNLLNPICGTRIYDKINSGEFIEINHTDALKSICIARIALPKKVIRLCGGREHVLKDMQKYSLYVLDGLMIGNYLTTNGQNIQSDLKMIDEMGFKQ.

In terms of domain architecture, Radical SAM core spans 49 to 282; sequence FNKEKIDLCS…KKVIRLCGGR (234 aa). The [4Fe-4S] cluster site is built by cysteine 67, cysteine 71, and cysteine 74. Serine 110, cysteine 142, cysteine 201, and arginine 277 together coordinate [2Fe-2S] cluster.

This sequence belongs to the radical SAM superfamily. Biotin synthase family. As to quaternary structure, homodimer. [4Fe-4S] cluster serves as cofactor. Requires [2Fe-2S] cluster as cofactor.

The catalysed reaction is (4R,5S)-dethiobiotin + (sulfur carrier)-SH + 2 reduced [2Fe-2S]-[ferredoxin] + 2 S-adenosyl-L-methionine = (sulfur carrier)-H + biotin + 2 5'-deoxyadenosine + 2 L-methionine + 2 oxidized [2Fe-2S]-[ferredoxin]. Its pathway is cofactor biosynthesis; biotin biosynthesis; biotin from 7,8-diaminononanoate: step 2/2. Its function is as follows. Catalyzes the conversion of dethiobiotin (DTB) to biotin by the insertion of a sulfur atom into dethiobiotin via a radical-based mechanism. The polypeptide is Biotin synthase (Methanococcus maripaludis (strain C7 / ATCC BAA-1331)).